The sequence spans 562 residues: Glutamate--tRNA ligase (562 aa).

The short motif at 104-114 (PNPDFYMTLGN) is the 'HIGH' region element.

The protein belongs to the class-I aminoacyl-tRNA synthetase family. Glutamate--tRNA ligase type 2 subfamily.

It is found in the cytoplasm. It carries out the reaction tRNA(Glu) + L-glutamate + ATP = L-glutamyl-tRNA(Glu) + AMP + diphosphate. Catalyzes the attachment of glutamate to tRNA(Glu) in a two-step reaction: glutamate is first activated by ATP to form Glu-AMP and then transferred to the acceptor end of tRNA(Glu). The chain is Glutamate--tRNA ligase from Ignicoccus hospitalis (strain KIN4/I / DSM 18386 / JCM 14125).